The primary structure comprises 1266 residues: Formin-like protein 13 (1266 aa).

The 185-residue stretch at 9-193 (YRKPPDGLLE…QYVSRRNLVS (185 aa)) folds into the Phosphatase tensin-type domain. C126 acts as the Phosphocysteine intermediate in catalysis. Positions 199–337 (DRALTMDCVI…FRVELLFSDM (139 aa)) constitute a C2 tensin-type domain. Disordered regions lie at residues 497 to 568 (KPLV…LQHS), 597 to 825 (KNLI…GKGR), 881 to 902 (SASA…PKPE), and 1210 to 1266 (QLEA…RTAP). Residues 529-538 (PPTPSPPHPV) are compositionally biased toward pro residues. Residues 617–644 (EPSSKTTNSLLLSPQASPATPTNPSKTV) are compositionally biased toward polar residues. Composition is skewed to pro residues over residues 686 to 698 (LPRP…PPPM), 706 to 742 (VPPP…PPTP), 754 to 781 (PPAP…PPPL), and 806 to 815 (PNVPPTPALP). The region spanning 829-1226 (VNLKNSPAKK…KNAAEKEKPK (398 aa)) is the FH2 domain. Basic and acidic residues-rich tracts occupy residues 889-902 (GKSR…PKPE), 1210-1248 (QLEA…EKTK), and 1255-1266 (EMSDRLKERTAP).

The protein belongs to the formin-like family. Class-II subfamily.

This is Formin-like protein 13 (FH13) from Arabidopsis thaliana (Mouse-ear cress).